Reading from the N-terminus, the 474-residue chain is Protein anachronism (474 aa).

The N-terminal stretch at 1–33 (MASAMRGEKCERSRIRELVLILSLITMAGDSRA) is a signal peptide. Asn54, Asn62, Asn73, Asn116, and Asn144 each carry an N-linked (GlcNAc...) asparagine glycan. The disordered stretch occupies residues 173 to 195 (NPGQTREHNPGQASTQPISTENP). The span at 183-195 (GQASTQPISTENP) shows a compositional bias: polar residues. Residue Asn342 is glycosylated (N-linked (GlcNAc...) asparagine). Polar residues predominate over residues 359–372 (FIESTTSNSPTIDN). The interval 359-474 (FIESTTSNSP…HHRIPAHKQE (116 aa)) is disordered. Composition is skewed to basic residues over residues 390–400 (LVHHRRHHHNH) and 437–474 (NHHR…HKQE).

In terms of tissue distribution, synthesized in some glial cells and secreted.

The protein localises to the secreted. Negatively regulates proliferation of neuronal precursor cells, thereby controlling the timing of postembryonic neurogenesis. In Drosophila melanogaster (Fruit fly), this protein is Protein anachronism (ana).